Here is an 875-residue protein sequence, read N- to C-terminus: Neurotrypsin (875 aa).

The first 20 residues, 1–20 (MTLARFVLALMLGALPEVVG), serve as a signal peptide directing secretion. An N-linked (GlcNAc...) asparagine glycan is attached at Asn26. The disordered stretch occupies residues 29–88 (LHHSHRHSPPPGPHYPYYLPTQQRPPRTRPPPPLPRFPRPPRALPAQRPHALQAGHTPRP). Low complexity predominate over residues 43–53 (YPYYLPTQQRP). The span at 56-71 (TRPPPPLPRFPRPPRA) shows a compositional bias: pro residues. The Kringle domain maps to 93 to 165 (CPAGEPWVSV…GKVDWGYCDC (73 aa)). Disulfide bonds link Cys93–Cys165, Cys109–Cys149, Cys138–Cys163, Cys195–Cys259, Cys208–Cys269, Cys239–Cys249, Cys305–Cys369, Cys318–Cys379, Cys349–Cys359, Cys412–Cys475, Cys425–Cys485, Cys455–Cys465, Cys525–Cys589, Cys538–Cys599, Cys569–Cys579, Cys619–Cys750, Cys661–Cys677, Cys765–Cys831, Cys794–Cys808, and Cys821–Cys850. 4 consecutive SRCR domains span residues 170–271 (VRLR…TCSF), 280–381 (IRLA…SCTP), 387–487 (IRLA…ACYP), and 500–601 (VRLV…ICDY). Residues 619–630 (CGLRLLHRRQKR) form a zymogen activation region region. One can recognise a Peptidase S1 domain in the interval 631–874 (IIGGKNSLRG…FVPWIKSVTK (244 aa)). The active-site Charge relay system is His676. Asn683 is a glycosylation site (N-linked (GlcNAc...) asparagine). Asp726 acts as the Charge relay system in catalysis. Ser825 (charge relay system) is an active-site residue.

It belongs to the peptidase S1 family.

It localises to the secreted. In terms of biological role, plays a role in neuronal plasticity and the proteolytic action may subserve structural reorganizations associated with learning and memory operations. This Pan troglodytes (Chimpanzee) protein is Neurotrypsin (PRSS12).